Consider the following 146-residue polypeptide: Holo-[acyl-carrier-protein] synthase (146 aa).

The Mg(2+) site is built by aspartate 9 and glutamate 63.

The protein belongs to the P-Pant transferase superfamily. AcpS family. It depends on Mg(2+) as a cofactor.

It is found in the cytoplasm. The enzyme catalyses apo-[ACP] + CoA = holo-[ACP] + adenosine 3',5'-bisphosphate + H(+). Transfers the 4'-phosphopantetheine moiety from coenzyme A to a Ser of acyl-carrier-protein. This chain is Holo-[acyl-carrier-protein] synthase, found in Burkholderia orbicola (strain MC0-3).